A 399-amino-acid chain; its full sequence is Elongation factor Tu (399 aa).

The tr-type G domain occupies 10–204 (KPHVNIGTIG…SVDESIPEPE (195 aa)). Residues 19-26 (GHVDHGKT) form a G1 region. 19–26 (GHVDHGKT) contacts GTP. Residue T26 participates in Mg(2+) binding. The tract at residues 60 to 64 (GITIN) is G2. Residues 81–84 (DCPG) are G3. GTP contacts are provided by residues 81–85 (DCPGH) and 136–139 (NKCD). The G4 stretch occupies residues 136-139 (NKCD). A G5 region spans residues 174–176 (SAL).

Belongs to the TRAFAC class translation factor GTPase superfamily. Classic translation factor GTPase family. EF-Tu/EF-1A subfamily. In terms of assembly, monomer.

It is found in the cytoplasm. It carries out the reaction GTP + H2O = GDP + phosphate + H(+). In terms of biological role, GTP hydrolase that promotes the GTP-dependent binding of aminoacyl-tRNA to the A-site of ribosomes during protein biosynthesis. The protein is Elongation factor Tu of Prochlorococcus marinus (strain MIT 9211).